The following is a 373-amino-acid chain: uncharacterized protein (373 aa).

This is an uncharacterized protein from Thermoproteus tenax.